A 252-amino-acid polypeptide reads, in one-letter code: Phosphosulfolactate synthase (252 aa).

Belongs to the phosphosulfolactate synthase family.

The catalysed reaction is (2R)-O-phospho-3-sulfolactate = phosphoenolpyruvate + sulfite + H(+). In terms of biological role, catalyzes the addition of sulfite to phosphoenolpyruvate (PEP) to yield (2R)-phospho-3-sulfolactate (PSL). Is probably involved in the biosynthesis of L-sulfolactate, which is a major constituent of sporulating cells and mature spores. In Bacillus subtilis (strain 168), this protein is Phosphosulfolactate synthase (yitD).